Reading from the N-terminus, the 348-residue chain is Dihydroorotase (348 aa).

Positions 17 and 19 each coordinate Zn(2+). Substrate is bound by residues 19–21 (HLR) and Asn-45. The Zn(2+) site is built by Lys-103, His-140, and His-178. Lys-103 carries the post-translational modification N6-carboxylysine. A substrate-binding site is contributed by His-140. Leu-223 contributes to the substrate binding site. Asp-251 is a Zn(2+) binding site. Asp-251 is an active-site residue. Positions 255 and 267 each coordinate substrate.

Belongs to the metallo-dependent hydrolases superfamily. DHOase family. Class II DHOase subfamily. In terms of assembly, homodimer. It depends on Zn(2+) as a cofactor.

It catalyses the reaction (S)-dihydroorotate + H2O = N-carbamoyl-L-aspartate + H(+). It participates in pyrimidine metabolism; UMP biosynthesis via de novo pathway; (S)-dihydroorotate from bicarbonate: step 3/3. In terms of biological role, catalyzes the reversible cyclization of carbamoyl aspartate to dihydroorotate. In Escherichia coli O17:K52:H18 (strain UMN026 / ExPEC), this protein is Dihydroorotase.